A 486-amino-acid polypeptide reads, in one-letter code: Glutamyl-tRNA(Gln) amidotransferase subunit A (486 aa).

Catalysis depends on charge relay system residues lysine 79 and serine 154. The active-site Acyl-ester intermediate is the serine 178.

Belongs to the amidase family. GatA subfamily. As to quaternary structure, heterotrimer of A, B and C subunits.

It carries out the reaction L-glutamyl-tRNA(Gln) + L-glutamine + ATP + H2O = L-glutaminyl-tRNA(Gln) + L-glutamate + ADP + phosphate + H(+). Functionally, allows the formation of correctly charged Gln-tRNA(Gln) through the transamidation of misacylated Glu-tRNA(Gln) in organisms which lack glutaminyl-tRNA synthetase. The reaction takes place in the presence of glutamine and ATP through an activated gamma-phospho-Glu-tRNA(Gln). This Dehalococcoides mccartyi (strain ATCC BAA-2266 / KCTC 15142 / 195) (Dehalococcoides ethenogenes (strain 195)) protein is Glutamyl-tRNA(Gln) amidotransferase subunit A.